The chain runs to 420 residues: Aminoacyltransferase FemA (420 aa).

It belongs to the FemABX family. As to quaternary structure, homodimer. Interacts with FemB.

The protein resides in the cytoplasm. It carries out the reaction beta-D-GlcNAc-(1-&gt;4)-Mur2Ac(oyl-L-Ala-D-isoglutaminyl-L-Lys-(N(6)-Gly)-D-Ala-D-Ala)-di-trans,octa-cis-undecaprenyl diphosphate + 2 glycyl-tRNA(Gly) = MurNAc-L-Ala-D-isoglutaminyl-L-Lys-(N(6)-tri-Gly)-D-Ala-D-Ala-diphospho-di-trans,octa-cis-undecaprenyl-GlcNAc + 2 tRNA(Gly) + 2 H(+). In terms of biological role, catalyzes the formation of the pentaglycine interpeptide bridge, which is characteristic of the S.aureus peptidoglycan. Adds glycines 2 and 3 of the pentaglycine bridge, using glycyl-tRNA(Gly) as donor. Involved in resistance to methicillin. The chain is Aminoacyltransferase FemA (femA) from Staphylococcus aureus (strain MRSA252).